Reading from the N-terminus, the 735-residue chain is Probable E3 ubiquitin-protein ligase MID2 (735 aa).

The RING-type zinc-finger motif lies at 30–80 (CPICLELFEDPLLLPCAHSLCFSCAHRILVSSCSSGESIEPITAFQCPTCR). The B box-type 1; degenerate zinc-finger motif lies at 137–184 (IACQFCEQDPPRDAVKTCITCEVSYCDRCLRATHPNKKPFTSHRLVEP). Residues 190–232 (LRGITCLDHENEKVNMYCVSDDQLICALCKLVGRHRDHQVASL) form a B box-type 2 zinc finger. Zn(2+)-binding residues include C195, H198, C218, and H224. The stretch at 233-301 (NDRFEKLKQT…IIQQRKQMIA (69 aa)) forms a coiled coil. A COS domain is found at 340-399 (LKENDQARFLQSAKNIAERVAMATASSQVLIPDINFNDAFENFALDFSREKKLLEGLDYL). The Fibronectin type-III domain maps to 398–531 (YLTAPNPPSI…RNSEPTRLKT (134 aa)). The 194-residue stretch at 516-709 (INQAGSRNSE…ILSGLPAPDF (194 aa)) folds into the B30.2/SPRY domain.

It belongs to the TRIM/RBCC family. Homodimer or heterodimer with MID1. Interacts with IGBP1. Phosphorylated on serine and threonine residues. Low level in fetal kidney and lung, and in adult prostate, ovary and small intestine.

It is found in the cytoplasm. The protein localises to the cytoskeleton. The catalysed reaction is S-ubiquitinyl-[E2 ubiquitin-conjugating enzyme]-L-cysteine + [acceptor protein]-L-lysine = [E2 ubiquitin-conjugating enzyme]-L-cysteine + N(6)-ubiquitinyl-[acceptor protein]-L-lysine.. Its pathway is protein modification; protein ubiquitination. In terms of biological role, E3 ubiquitin ligase that plays a role in microtubule stabilization. Mediates the 'Lys-48'-linked polyubiquitination of LRRK2 to drive its localization to microtubules and its proteasomal degradation in neurons. This ubiquitination inhibits LRRK2 kinase activation by RAB29. This chain is Probable E3 ubiquitin-protein ligase MID2 (MID2), found in Homo sapiens (Human).